We begin with the raw amino-acid sequence, 138 residues long: UPF0251 protein Dole_1957 (138 aa).

It belongs to the UPF0251 family.

The protein is UPF0251 protein Dole_1957 of Desulfosudis oleivorans (strain DSM 6200 / JCM 39069 / Hxd3) (Desulfococcus oleovorans).